The following is a 353-amino-acid chain: MTKITNDLFLKAARKEQVDRIPVWYMRQAGRSQPEYRKLKEKYSLFEITHQPEICAYVTKLPVDQYGVDAAILYKDIMTPLPGMGVDVEIKSGIGPVIHNPIRSFQDVEKLTMFKPEIEVPYVLDTIKLLADDMLDVPLIGFAGAPFTLASYMIEGGPSKNYHQTKSFMYREPEVWAILMEKLGRMTANYLIAQINAGASAVQLFDSWVGALSRADYAEYIRPVIEMIVREVKAVHPTTPIIMQAVGASHLLAEWETMPLDVVGVDWRETITSARKKVPTKAIQGNLDPSTLLAPEKCLKEANRILQEGVLEPGYIFNLGHGVFPEVPPEMLKKLTNYIHERSEILLKKDDIK.

Substrate-binding positions include 27–31 (RQAGR), F46, D76, Y152, S207, and H321.

It belongs to the uroporphyrinogen decarboxylase family. Homodimer.

It localises to the cytoplasm. It catalyses the reaction uroporphyrinogen III + 4 H(+) = coproporphyrinogen III + 4 CO2. It participates in porphyrin-containing compound metabolism; protoporphyrin-IX biosynthesis; coproporphyrinogen-III from 5-aminolevulinate: step 4/4. In terms of biological role, catalyzes the decarboxylation of four acetate groups of uroporphyrinogen-III to yield coproporphyrinogen-III. This Listeria monocytogenes serotype 4b (strain F2365) protein is Uroporphyrinogen decarboxylase.